The sequence spans 160 residues: MPSFDVVSEVDKHELTNAVDQANRELSTRFDFKGSDAKFELEGYVVTQVASSAFQLKQMLDILRGRLGARGIDVRCLDEESPLENLGGARQKITIKQGIEQAVSKKLIAAIKASKLKVESQINGEKLRITGKKRDDLQAVMQLLRKTEVDLPLQFDNFRD.

The protein belongs to the YajQ family.

Its function is as follows. Nucleotide-binding protein. This chain is Nucleotide-binding protein BAV0791, found in Bordetella avium (strain 197N).